The primary structure comprises 301 residues: 4-hydroxy-tetrahydrodipicolinate synthase (301 aa).

Thr53 contacts pyruvate. Tyr142 serves as the catalytic Proton donor/acceptor. Residue Lys170 is the Schiff-base intermediate with substrate of the active site. Residue Val212 participates in pyruvate binding.

It belongs to the DapA family. Homotetramer; dimer of dimers.

It is found in the cytoplasm. The catalysed reaction is L-aspartate 4-semialdehyde + pyruvate = (2S,4S)-4-hydroxy-2,3,4,5-tetrahydrodipicolinate + H2O + H(+). The protein operates within amino-acid biosynthesis; L-lysine biosynthesis via DAP pathway; (S)-tetrahydrodipicolinate from L-aspartate: step 3/4. Functionally, catalyzes the condensation of (S)-aspartate-beta-semialdehyde [(S)-ASA] and pyruvate to 4-hydroxy-tetrahydrodipicolinate (HTPA). The protein is 4-hydroxy-tetrahydrodipicolinate synthase of Synechocystis sp. (strain ATCC 27184 / PCC 6803 / Kazusa).